Here is a 312-residue protein sequence, read N- to C-terminus: DNA-directed RNA polymerase subunit alpha (312 aa).

Residues Met1–Thr229 form an alpha N-terminal domain (alpha-NTD) region. Residues Ser241–Val312 are alpha C-terminal domain (alpha-CTD).

The protein belongs to the RNA polymerase alpha chain family. As to quaternary structure, in cyanobacteria the RNAP catalytic core is composed of 2 alpha, 1 beta, 1 beta', 1 gamma and 1 omega subunit. When a sigma factor is associated with the core the holoenzyme is formed, which can initiate transcription.

It carries out the reaction RNA(n) + a ribonucleoside 5'-triphosphate = RNA(n+1) + diphosphate. DNA-dependent RNA polymerase catalyzes the transcription of DNA into RNA using the four ribonucleoside triphosphates as substrates. The sequence is that of DNA-directed RNA polymerase subunit alpha from Prochlorococcus marinus (strain MIT 9215).